We begin with the raw amino-acid sequence, 513 residues long: V-type proton ATPase subunit B, kidney isoform (513 aa).

Arginine 394 is a binding site for ATP. The PDZ-binding motif lies at 510–513 (DTAL).

Belongs to the ATPase alpha/beta chains family. As to quaternary structure, V-ATPase is a heteromultimeric enzyme made up of two complexes: the ATP-hydrolytic V1 complex and the proton translocation V0 complex. The V1 complex consists of three catalytic AB heterodimers that form a heterohexamer, three peripheral stalks each consisting of EG heterodimers, one central rotor including subunits D and F, and the regulatory subunits C and H. The proton translocation complex V0 consists of the proton transport subunit a, a ring of proteolipid subunits c9c'', rotary subunit d, subunits e and f, and the accessory subunits ATP6AP1/Ac45 and ATP6AP2/PRR. Forms a complex with NHERF1 and SCL4A7. As to expression, kidney cortex and medulla.

The protein resides in the apical cell membrane. It localises to the basolateral cell membrane. Functionally, non-catalytic subunit of the V1 complex of vacuolar(H+)-ATPase (V-ATPase), a multisubunit enzyme composed of a peripheral complex (V1) that hydrolyzes ATP and a membrane integral complex (V0) that translocates protons. V-ATPase is responsible for acidifying and maintaining the pH of intracellular compartments and in some cell types, is targeted to the plasma membrane, where it is responsible for acidifying the extracellular environment. Essential for the proper assembly and activity of V-ATPase. In renal intercalated cells, mediates secretion of protons (H+) into the urine thereby ensuring correct urinary acidification. Required for optimal olfactory function by mediating the acidification of the nasal olfactory epithelium. This chain is V-type proton ATPase subunit B, kidney isoform (ATP6V1B1), found in Bos taurus (Bovine).